A 396-amino-acid polypeptide reads, in one-letter code: Elongation factor Tu 1 (396 aa).

The region spanning K10 to K206 is the tr-type G domain. The interval G19 to T26 is G1. Residue G19 to T26 coordinates GTP. Residue T26 participates in Mg(2+) binding. Residues G60 to S64 form a G2 region. The interval D81–G84 is G3. GTP contacts are provided by residues D81–H85 and N136–D139. Residues N136 to D139 are G4. A G5 region spans residues S174 to L176.

It belongs to the TRAFAC class translation factor GTPase superfamily. Classic translation factor GTPase family. EF-Tu/EF-1A subfamily. As to quaternary structure, monomer.

It localises to the cytoplasm. It carries out the reaction GTP + H2O = GDP + phosphate + H(+). In terms of biological role, GTP hydrolase that promotes the GTP-dependent binding of aminoacyl-tRNA to the A-site of ribosomes during protein biosynthesis. This is Elongation factor Tu 1 from Ruthia magnifica subsp. Calyptogena magnifica.